We begin with the raw amino-acid sequence, 564 residues long: Nucleoprotein (564 aa).

The interval 54-236 is binding site for the cap structure m7GTP; it reads LRKTKRGEED…VTKDESSINI (183 aa). Residues D380 and E382 each contribute to the Mn(2+) site. The Zn(2+) site is built by E390, C497, H500, and C525. D529 is a Mn(2+) binding site.

The protein belongs to the arenaviridae nucleocapsid protein family. In terms of assembly, homomultimerizes to form the nucleocapsid. Binds to viral genomic RNA. Interacts with glycoprotein G2. Interacts with protein Z; this interaction probably directs the encapsidated genome to budding sites. Interacts with protein L; this interaction does not interfere with Z-L interaction. Interacts with host IKBKE (via Protein kinase domain); the interaction inhibits IKBKE kinase activity.

It localises to the virion. The protein localises to the host cytoplasm. Encapsidates the genome, protecting it from nucleases. The encapsidated genomic RNA is termed the nucleocapsid (NC). Serves as template for viral transcription and replication. The increased presence of protein N in host cell does not seem to trigger the switch from transcription to replication as observed in other negative strain RNA viruses. Through the interaction with host IKBKE, strongly inhibits the phosphorylation and nuclear translocation of host IRF3, a protein involved in interferon activation pathway, leading to the inhibition of interferon-beta and IRF3-dependent promoters activation. Also encodes a functional 3'-5' exoribonuclease that degrades preferentially dsRNA substrates and thereby participates in the suppression of interferon induction. The protein is Nucleoprotein of Akodon azarae (Azara's grass mouse).